A 73-amino-acid polypeptide reads, in one-letter code: Protein SlyX homolog (73 aa).

Belongs to the SlyX family.

In Actinobacillus pleuropneumoniae serotype 5b (strain L20), this protein is Protein SlyX homolog.